Consider the following 313-residue polypeptide: 2,3-dihydroxyphenylpropionate/2,3-dihydroxicinnamic acid 1,2-dioxygenase (313 aa).

The active-site Proton donor is His-115. His-179 functions as the Proton acceptor in the catalytic mechanism.

This sequence belongs to the LigB/MhpB extradiol dioxygenase family. As to quaternary structure, homotetramer. Fe(2+) is required as a cofactor.

It carries out the reaction 3-(2,3-dihydroxyphenyl)propanoate + O2 = (2Z,4E)-2-hydroxy-6-oxonona-2,4-dienedioate + H(+). The enzyme catalyses (2E)-3-(2,3-dihydroxyphenyl)prop-2-enoate + O2 = (2Z,4E,7E)-2-hydroxy-6-oxonona-2,4,7-trienedioate + H(+). Its pathway is aromatic compound metabolism; 3-phenylpropanoate degradation. In terms of biological role, catalyzes the non-heme iron(II)-dependent oxidative cleavage of 2,3-dihydroxyphenylpropionic acid and 2,3-dihydroxicinnamic acid into 2-hydroxy-6-ketononadienedioate and 2-hydroxy-6-ketononatrienedioate, respectively. In Xanthobacter autotrophicus (strain ATCC BAA-1158 / Py2), this protein is 2,3-dihydroxyphenylpropionate/2,3-dihydroxicinnamic acid 1,2-dioxygenase.